Here is a 322-residue protein sequence, read N- to C-terminus: Thioredoxin reductase (322 aa).

Residues 12-15, 34-42, N51, and V84 contribute to the FAD site; these read SGPA and EGAVTAGGA. C136 and C139 are joined by a disulfide. Residues H176, R182, I239, and Y259 each coordinate NADP(+). Residues D279 and 286 to 289 each bind FAD; that span reads RQAI. R286 lines the NADP(+) pocket.

It belongs to the class-II pyridine nucleotide-disulfide oxidoreductase family. As to quaternary structure, homodimer. FAD is required as a cofactor.

The protein resides in the cytoplasm. It carries out the reaction [thioredoxin]-dithiol + NADP(+) = [thioredoxin]-disulfide + NADPH + H(+). This chain is Thioredoxin reductase, found in Streptomyces coelicolor (strain ATCC BAA-471 / A3(2) / M145).